The chain runs to 288 residues: Probable endonuclease 4 (288 aa).

Residues histidine 75, histidine 115, glutamate 153, aspartate 187, histidine 190, histidine 224, aspartate 237, histidine 239, and glutamate 269 each coordinate Zn(2+).

It belongs to the AP endonuclease 2 family. Zn(2+) is required as a cofactor.

It carries out the reaction Endonucleolytic cleavage to 5'-phosphooligonucleotide end-products.. In terms of biological role, endonuclease IV plays a role in DNA repair. It cleaves phosphodiester bonds at apurinic or apyrimidinic (AP) sites, generating a 3'-hydroxyl group and a 5'-terminal sugar phosphate. The chain is Probable endonuclease 4 from Chlamydia muridarum (strain MoPn / Nigg).